A 182-amino-acid polypeptide reads, in one-letter code: Probable nicotinate-nucleotide adenylyltransferase (182 aa).

Belongs to the NadD family.

It catalyses the reaction nicotinate beta-D-ribonucleotide + ATP + H(+) = deamido-NAD(+) + diphosphate. The protein operates within cofactor biosynthesis; NAD(+) biosynthesis; deamido-NAD(+) from nicotinate D-ribonucleotide: step 1/1. Its function is as follows. Catalyzes the reversible adenylation of nicotinate mononucleotide (NaMN) to nicotinic acid adenine dinucleotide (NaAD). The chain is Probable nicotinate-nucleotide adenylyltransferase from Sulfurimonas denitrificans (strain ATCC 33889 / DSM 1251) (Thiomicrospira denitrificans (strain ATCC 33889 / DSM 1251)).